The following is a 310-amino-acid chain: MASYLDFEKGIKQIDDDIANAKIRGDEHAVEILRKNLEKEITKTYKNLNEFQRLNLARHPDRPYALDYIRALLKDGYEIHGDRAFRDDPSIVCYIGYIGGKRVIVIAEQKGRGTKYKIMRNFGMPHPEGYRKALRIARLAEKFEIPIIFLIDTPGAYPGVGAEERGQSEAIARNLFEFSELKTRTIAVVIGEGGSGGALAIGVADRLAMMKNSVFSVISPEGCAAILWNDPSKNEAATKAMKITADDLKELQLIDDVIDEPVMGAHRDKEGAIKALGEYILKQLDELEKKDINDVVKNRIEKILSVGAYA.

The CoA carboxyltransferase C-terminal domain maps to 36 to 286 (NLEKEITKTY…GEYILKQLDE (251 aa)).

Belongs to the AccA family. Acetyl-CoA carboxylase is a heterohexamer composed of biotin carboxyl carrier protein (AccB), biotin carboxylase (AccC) and two subunits each of ACCase subunit alpha (AccA) and ACCase subunit beta (AccD).

It localises to the cytoplasm. It catalyses the reaction N(6)-carboxybiotinyl-L-lysyl-[protein] + acetyl-CoA = N(6)-biotinyl-L-lysyl-[protein] + malonyl-CoA. It participates in lipid metabolism; malonyl-CoA biosynthesis; malonyl-CoA from acetyl-CoA: step 1/1. Component of the acetyl coenzyme A carboxylase (ACC) complex. First, biotin carboxylase catalyzes the carboxylation of biotin on its carrier protein (BCCP) and then the CO(2) group is transferred by the carboxyltransferase to acetyl-CoA to form malonyl-CoA. This is Acetyl-coenzyme A carboxylase carboxyl transferase subunit alpha from Campylobacter fetus subsp. fetus (strain 82-40).